A 361-amino-acid polypeptide reads, in one-letter code: Replication-associated protein (361 aa).

One can recognise a CRESS-DNA virus Rep endonuclease domain in the interval 8 to 116 (AINAKNYFLT…DGDVLDHGSF (109 aa)). The RCR-1 motif lies at 15–18 (FLTY). Residues Glu49, His57, and His59 each contribute to the a divalent metal cation site. An RCR-2 motif is present at residues 57–59 (HLH). Catalysis depends on Tyr103, which acts as the For DNA cleavage activity. The short motif at 103-106 (YMDK) is the RCR-3 element. Asp107 serves as a coordination point for a divalent metal cation. The binding to RBR1 stretch occupies residues 143–153 (KLQALNILREK). Residues 156–176 (KDYILQFHNLNCNLSRIFADD) are oligomerization. 220 to 227 (GDSRTGKT) is an ATP binding site.

It belongs to the geminiviridae Rep protein family. In terms of assembly, homooligomer. Interacts with the replication enhancer protein (REn). Interacts with host retinoblastoma-related protein 1 (RBR1), and may thereby induce the transcription of host replicative enzymes even if the cell is not dividing anymore. Interacts with host PCNA. Interacts with host SCE1 protein. Binds to host RAD54 protein to ensure geminiviral replication. Requires Mg(2+) as cofactor. Mn(2+) serves as cofactor.

It localises to the host nucleus. Functionally, essential for the replication of viral ssDNA. The closed circular ssDNA genome is first converted to a superhelical dsDNA. Rep binds a specific region at the genome origin of replication. It introduces an endonucleolytic nick within the conserved sequence 5'-TAATATTAC-3' in the intergenic region of the genome present in all geminiviruses, thereby initiating the rolling circle replication (RCR). Following cleavage, binds covalently to the 5'-phosphate of DNA as a tyrosyl ester. The cleavage gives rise to a free 3'-OH that serves as a primer for the cellular DNA polymerase. The polymerase synthesizes the (+) strand DNA by rolling circle mechanism. After one round of replication, a Rep-catalyzed nucleotidyl transfer reaction releases a circular single-stranded virus genome, thereby terminating the replication. Displays origin-specific DNA cleavage, nucleotidyl transferase, ATPase and helicase activities. The polypeptide is Replication-associated protein (Mungbean yellow mosaic virus (strain Vigna) (MYMV)).